A 436-amino-acid chain; its full sequence is Ribosomal protein uS12 methylthiotransferase RimO (436 aa).

One can recognise an MTTase N-terminal domain in the interval 2-114 (PNLYLVSLGC…IDEMILKKQN (113 aa)). [4Fe-4S] cluster contacts are provided by Cys11, Cys45, Cys77, Cys146, Cys150, and Cys153. The Radical SAM core domain occupies 132–363 (TGSSYHAYIK…IKKQIEGSFK (232 aa)). The TRAM domain occupies 363-434 (KSLVGEVIKV…KDKLIGEIIC (72 aa)).

This sequence belongs to the methylthiotransferase family. RimO subfamily. [4Fe-4S] cluster is required as a cofactor.

It is found in the cytoplasm. It carries out the reaction L-aspartate(89)-[ribosomal protein uS12]-hydrogen + (sulfur carrier)-SH + AH2 + 2 S-adenosyl-L-methionine = 3-methylsulfanyl-L-aspartate(89)-[ribosomal protein uS12]-hydrogen + (sulfur carrier)-H + 5'-deoxyadenosine + L-methionine + A + S-adenosyl-L-homocysteine + 2 H(+). Functionally, catalyzes the methylthiolation of an aspartic acid residue of ribosomal protein uS12. In Campylobacter fetus subsp. fetus (strain 82-40), this protein is Ribosomal protein uS12 methylthiotransferase RimO.